The following is a 99-amino-acid chain: Ribonuclease P protein component 1 (99 aa).

This sequence belongs to the eukaryotic/archaeal RNase P protein component 1 family. As to quaternary structure, consists of a catalytic RNA component and at least 4-5 protein subunits.

It localises to the cytoplasm. It catalyses the reaction Endonucleolytic cleavage of RNA, removing 5'-extranucleotides from tRNA precursor.. Functionally, part of ribonuclease P, a protein complex that generates mature tRNA molecules by cleaving their 5'-ends. In Methanococcus vannielii, this protein is Ribonuclease P protein component 1.